A 407-amino-acid polypeptide reads, in one-letter code: Carbamoyl phosphate synthase small chain (407 aa).

The CPSase stretch occupies residues Met1–Glu203. L-glutamine contacts are provided by Ser61, Gly255, and Gly257. Positions Thr207 to Glu405 constitute a Glutamine amidotransferase type-1 domain. Cys283 serves as the catalytic Nucleophile. L-glutamine-binding residues include Phe284, Gln287, Asn325, Gly327, and Phe328. Catalysis depends on residues His378 and Glu380.

Belongs to the CarA family. Composed of two chains; the small (or glutamine) chain promotes the hydrolysis of glutamine to ammonia, which is used by the large (or ammonia) chain to synthesize carbamoyl phosphate. Tetramer of heterodimers (alpha,beta)4.

It carries out the reaction hydrogencarbonate + L-glutamine + 2 ATP + H2O = carbamoyl phosphate + L-glutamate + 2 ADP + phosphate + 2 H(+). The catalysed reaction is L-glutamine + H2O = L-glutamate + NH4(+). The protein operates within amino-acid biosynthesis; L-arginine biosynthesis; carbamoyl phosphate from bicarbonate: step 1/1. It participates in pyrimidine metabolism; UMP biosynthesis via de novo pathway; (S)-dihydroorotate from bicarbonate: step 1/3. Functionally, small subunit of the glutamine-dependent carbamoyl phosphate synthetase (CPSase). CPSase catalyzes the formation of carbamoyl phosphate from the ammonia moiety of glutamine, carbonate, and phosphate donated by ATP, constituting the first step of 2 biosynthetic pathways, one leading to arginine and/or urea and the other to pyrimidine nucleotides. The small subunit (glutamine amidotransferase) binds and cleaves glutamine to supply the large subunit with the substrate ammonia. The protein is Carbamoyl phosphate synthase small chain of Bifidobacterium longum (strain NCC 2705).